Reading from the N-terminus, the 879-residue chain is MGRPAPRPLLLALLSLAVCRGRVVRVPAGTLVRVVGTELVIPCNVSDYDGPSEQNFDWSFSSSGSSFVELASTWEVGFPAQQYRERLQRGDILLRRTANDAVELHIKNVQPSDQGHYKCSTPSTDATVQGNYEDTMQVKVLADALVVGPSSRPPPGLSLREGEPFELRCIASTTSPLHTHLALRWELHRGPVHRSILALSHEGRFHPGPGYEQRYHSGDVRLDTVGSDAYRLSVARALSADQGSYRCVVSEWITEQGSWQEIQEKAVEVATVVIQPTALQLAVPRTVSVTEGKDLDLSCNITTDRVDDVRPEVTWYFKKTPDTSLLASHMLARLDRDSLVHSSPHVALSHVDTRSYHLLVRDVSKENSGYYLCLVALWAPGHNRSWHKVAEAMSAPSGVSVTWLEPEYQVYLNASKVPGFSDDPTELQCRVIDTKRVDAGVRLTVSWYYRMNRRNDDVVASELLAVMDGDWTLRYGERSKQRAQDGEFIFSKEHTDTFSFRIQRTTEEDRGSYYCVVSAWTRQRNSSWVKSKDVFSKPVNIFWASEDSVLVVKARQPKPFFAAGNTFEMTCKVSSKNIKSPRYSVLITAEKPVGDLSSPNETKYIISLDQDSVVKLENWTDASRVDGVVLEKVQEDEFRYRMYQTQVSDAGLYRCMVTAWSPIGGSLWREAATSLSNPIEIDFQTSGPIFNASVHSDTLSVTRGDLIKLFCIVTVDGAVLDPDDMAFDVSWFAVHSFGLDKAPILLSSLDRKGVVTTGQRDWKSTVSLERVSVLEFLLQVHSSEDQDFGNYYCSVTPWVRSPTGSWQREAEIHSRPIFITVKMDVLNAFKYPLLIGVGLSTVIGLLSCLIGYCSSHWCCKKEVRETRRERRRLMSMEMD.

The N-terminal stretch at 1 to 21 (MGRPAPRPLLLALLSLAVCRG) is a signal peptide. Ig-like C2-type domains are found at residues 22–129 (RVVR…ATVQ) and 149–268 (PSSR…KAVE). The Extracellular portion of the chain corresponds to 22–832 (RVVRVPAGTL…MDVLNAFKYP (811 aa)). Intrachain disulfides connect C43/C119 and C169/C247. A glycan (N-linked (GlcNAc...) asparagine) is linked at N44. The short motif at 89–91 (RGD) is the Cell attachment site element. T271 is subject to Phosphothreonine. 4 consecutive Ig-like C2-type domains span residues 276–389 (PTAL…WHKV), 406–527 (PEYQ…RNSS), 544–662 (ASED…AWSP), and 688–813 (PIFN…AEIH). A disulfide bridge connects residues C299 and C373. Residues N300, N383, and N413 are each glycosylated (N-linked (GlcNAc...) asparagine). Positions 424–427 (PTEL) match the Endoplasmic reticulum retention signal motif. C429 and C515 are oxidised to a cystine. N525, N600, N618, and N691 each carry an N-linked (GlcNAc...) asparagine glycan. C571 and C655 are disulfide-bonded. A Cell attachment site motif is present at residues 703–705 (RGD). An intrachain disulfide couples C711 to C793. A helical transmembrane segment spans residues 833-853 (LLIGVGLSTVIGLLSCLIGYC). Residues 854 to 879 (SSHWCCKKEVRETRRERRRLMSMEMD) lie on the Cytoplasmic side of the membrane.

Interacts with CD9 and CD81. Part of a complex composed of CD9, CD81 and IGSF8. Also seems to interact with CD63, CD82 and CD151. As to expression, reproductive tissues, lung and heart.

The protein resides in the endoplasmic reticulum membrane. Its subcellular location is the golgi apparatus. It is found in the trans-Golgi network membrane. Inhibits the binding of prostaglandin F2-alpha (PGF2-alpha) to its specific FP receptor, by decreasing the receptor number rather than the affinity constant. Functional coupling with the prostaglandin F2-alpha receptor seems to occur. In myoblasts, associates with tetraspanins CD9 and CD81 to prevent myotube fusion during muscle regeneration. This chain is Prostaglandin F2 receptor negative regulator (Ptgfrn), found in Rattus norvegicus (Rat).